The chain runs to 338 residues: Anthranilate phosphoribosyltransferase (338 aa).

Residues Gly-80, 83 to 84, Thr-88, 90 to 93, 108 to 116, and Ser-120 each bind 5-phospho-alpha-D-ribose 1-diphosphate; these read GD, NIST, and KHGNRSVSS. Gly-80 is a binding site for anthranilate. Ser-92 contributes to the Mg(2+) binding site. Asn-111 lines the anthranilate pocket. Arg-166 contributes to the anthranilate binding site. 2 residues coordinate Mg(2+): Asp-225 and Glu-226.

Belongs to the anthranilate phosphoribosyltransferase family. In terms of assembly, homodimer. Mg(2+) is required as a cofactor.

The enzyme catalyses N-(5-phospho-beta-D-ribosyl)anthranilate + diphosphate = 5-phospho-alpha-D-ribose 1-diphosphate + anthranilate. It participates in amino-acid biosynthesis; L-tryptophan biosynthesis; L-tryptophan from chorismate: step 2/5. Functionally, catalyzes the transfer of the phosphoribosyl group of 5-phosphorylribose-1-pyrophosphate (PRPP) to anthranilate to yield N-(5'-phosphoribosyl)-anthranilate (PRA). The chain is Anthranilate phosphoribosyltransferase from Desulfatibacillum aliphaticivorans.